The chain runs to 804 residues: Probable exo-1,4-beta-xylosidase xlnD (804 aa).

Residues 1 to 26 form the signal peptide; the sequence is MAHSMSRPVAATAAALLALALPQALA. N-linked (GlcNAc...) asparagine glycosylation is found at Asn-29, Asn-124, Asn-148, Asn-242, and Asn-251. Residue Asp-315 is part of the active site. Asn-357, Asn-390, Asn-413, Asn-444, Asn-455, Asn-573, Asn-576, Asn-665, Asn-696, and Asn-718 each carry an N-linked (GlcNAc...) asparagine glycan.

This sequence belongs to the glycosyl hydrolase 3 family.

It is found in the secreted. The catalysed reaction is Hydrolysis of (1-&gt;4)-beta-D-xylans, to remove successive D-xylose residues from the non-reducing termini.. The protein operates within glycan degradation; xylan degradation. Functionally, xylan 1,4-beta-xylosidase involved in the hydrolysis of xylan, a major structural heterogeneous polysaccharide found in plant biomass representing the second most abundant polysaccharide in the biosphere, after cellulose. This Aspergillus niger (strain ATCC MYA-4892 / CBS 513.88 / FGSC A1513) protein is Probable exo-1,4-beta-xylosidase xlnD (xlnD).